The chain runs to 269 residues: Eukaryotic translation initiation factor 3 subunit G-1 (269 aa).

The RRM domain maps to 188 to 266 (AAIRISNLSE…LILSVEWSKP (79 aa)).

Belongs to the eIF-3 subunit G family. Component of the eukaryotic translation initiation factor 3 (eIF-3) complex. The eIF-3 complex interacts with pix.

It localises to the cytoplasm. In terms of biological role, RNA-binding component of the eukaryotic translation initiation factor 3 (eIF-3) complex, which is involved in protein synthesis of a specialized repertoire of mRNAs and, together with other initiation factors, stimulates binding of mRNA and methionyl-tRNAi to the 40S ribosome. The eIF-3 complex specifically targets and initiates translation of a subset of mRNAs involved in cell proliferation. This subunit can bind 18S rRNA. The sequence is that of Eukaryotic translation initiation factor 3 subunit G-1 from Drosophila mojavensis (Fruit fly).